Here is a 290-residue protein sequence, read N- to C-terminus: Arylamine N-acetyltransferase 1 (290 aa).

N-acetylmethionine is present on Met1. Catalysis depends on Cys68, which acts as the Acyl-thioester intermediate. CoA is bound by residues Thr103 and Gly104. 106–107 (IH) serves as a coordination point for substrate. Catalysis depends on residues His107 and Asp122. Residues Tyr208 and Ser214 each coordinate CoA.

This sequence belongs to the arylamine N-acetyltransferase family.

It localises to the cytoplasm. It catalyses the reaction an arylamine + acetyl-CoA = an N-acetylarylamine + CoA. This Oryctolagus cuniculus (Rabbit) protein is Arylamine N-acetyltransferase 1 (NAT1).